A 270-amino-acid chain; its full sequence is SPbeta prophage-derived DNA ligase-like protein LigB (270 aa).

The active-site N6-AMP-lysine intermediate is lysine 25.

Belongs to the ATP-dependent DNA ligase family.

This is SPbeta prophage-derived DNA ligase-like protein LigB (ligB) from Bacillus subtilis (strain 168).